Consider the following 84-residue polypeptide: LYR motif-containing protein 5B (84 aa).

This sequence belongs to the complex I LYR family.

This is LYR motif-containing protein 5B (lyrm5b) from Danio rerio (Zebrafish).